A 609-amino-acid chain; its full sequence is Chaperone protein DnaK (609 aa).

Phosphothreonine; by autocatalysis is present on Thr-172. Residues 578-609 (QAQAQQQAGAGGAAKKDENVVDAEFEEVKDDK) form a disordered region. Positions 597-609 (VVDAEFEEVKDDK) are enriched in acidic residues.

Belongs to the heat shock protein 70 family.

Its function is as follows. Acts as a chaperone. The polypeptide is Chaperone protein DnaK (Geobacillus sp. (strain WCH70)).